A 407-amino-acid polypeptide reads, in one-letter code: Naringenin 8-dimethylallyltransferase 2, chloroplastic (407 aa).

The transit peptide at 1-23 directs the protein to the chloroplast; that stretch reads MGFVLPASFPGASSITTGGSCLR. 8 helical membrane passes run 117–137, 145–165, 206–226, 248–268, 285–305, 328–348, 352–372, and 383–403; these read FCRP…SLVA, SLAF…IHIF, ILGL…TVFI, VLTA…GFFL, LIFC…FKDI, VFWI…LVGA, ILWS…VLWY, and VVLQ…YCLI.

Belongs to the UbiA prenyltransferase family. The cofactor is Mg(2+). Requires Mn(2+) as cofactor.

The protein localises to the plastid. Its subcellular location is the chloroplast membrane. It carries out the reaction (2S)-naringenin + dimethylallyl diphosphate = sophoraflavanone B + diphosphate. Involved in the biosynthesis of sophoraflavanone G (SFG). Can use flavanones (naringenin, liquiritigenin and hesperetin) as substrates, but not flavonols or isoflavones. Shows a strict specificity for dimethylallyl diphosphate. The sequence is that of Naringenin 8-dimethylallyltransferase 2, chloroplastic (N8DT-2) from Sophora flavescens (Shrubby sophora).